Reading from the N-terminus, the 964-residue chain is MQKIKSLMTRQGLKSPPESLNDLGAFESLRVPGKEEFRELREQPSDPQAEQELINSIEQVYFSADPFDIVKYELEKLPPVLNLQELEEYRDKLKQQQAAVSKKVADLILEKQPAYVKELERVTSLQTGLQLAAVICTNSRRHLNIAKEGFTQASLGLLANQRKRQLLIGLLKSLRTIKTLQRTDVRLSEMLEEEDYPGAIQLCLECQKAASTFKHYSCISELNSKLQDTLEQIEEQLDVALSKICKNFDVNHYTKVQQAYRLLGKTQTAMDQLHMHFTQAIHNTVFQVVLGYVELCAGNTDTKFQKLQYKDLCTHVTPDSYIPCLADLCKALWEVMLSYYRTMEWHEKHDSEETAAASEGSNVMSTEETNFDRGYVKKKLEHGLTRIWQDVQLKVKTYLLGTDLSIFKYDDFIFVLDIVSRLMQVGEEFCGSKSEVLQESIRKQSINYFKNHHRIRLDELRMFLENETWELCPVKSNFSILQLHEFKFLEQSRSPSVSPSKQPSATSSKPVTLFEQYCSGGNPFEIQADHKDEETEDVLASNGYESDEQEKSAYQDYDSDSDVPEELKRDYVDEQTGDVPVKSVSRETLKSRKKSDYSLNKVNAPILTNTTLNVIRLVGKYMQMMNILKPIAFDVIHFMSQLFDYYLYAIYTFFGRNDSLESTGLGLSSSRLRTTLNRIQESLIDLEGSADPTATLTAAEERKEKVPSPHLNQLVILTSGDTLYGLAERVVATESLVFLAEQFEFLQPHLDAVMPAVKKPFLQQFYSQTVSTASELRKPIYWIVAGKAIDYEQMLLLMTNVKWDVKEIMSQHNVYVDALLKEFEQFNKRLNEVSKRVRIPLPVSNILWEHCIRLANRTIVEGYANVKKCSNEGRALMQLDFQQFLMKLEKLTDIRPIPDKEFVEIYIKAYYLTENDMERWIKEHREYSTKQLTNLVNVCLGSHINKKARQKLLAAIDDIDRPKR.

An N-acetylmethionine modification is found at Met-1. Residues 1–25 (MQKIKSLMTRQGLKSPPESLNDLGA) are disordered. A Phosphoserine modification is found at Ser-15. 2 coiled-coil regions span residues 81–107 (LNLQ…VADL) and 216–244 (YSCI…LSKI). Phosphoserine is present on residues Ser-494, Ser-498, Ser-559, and Ser-561. A disordered region spans residues 532 to 563 (DEETEDVLASNGYESDEQEKSAYQDYDSDSDV). Residue Lys-963 forms a Glycyl lysine isopeptide (Lys-Gly) (interchain with G-Cter in SUMO1); alternate linkage. Residue Lys-963 forms a Glycyl lysine isopeptide (Lys-Gly) (interchain with G-Cter in SUMO2); alternate linkage.

The protein belongs to the syndetin family. As to quaternary structure, component of the endosome-associated retrograde protein (EARP) complex, composed of VPS51, VPS52, VPS53 and VPS50/Syndetin. The EARP complex interacts with EIPR1. Interacts with VPS51 and VPS53 in an EIPR1-independent manner. In terms of tissue distribution, expressed in the brain (at protein level).

The protein localises to the recycling endosome. Its subcellular location is the membrane. Acts as a component of the EARP complex that is involved in endocytic recycling. The EARP complex associates with Rab4-positive endosomes and promotes recycling of internalized transferrin receptor (TFRC) to the plasma membrane. Within the EARP complex, required to tether the complex to recycling endosomes. Not involved in retrograde transport from early and late endosomes to the trans-Golgi network (TGN). This is Syndetin from Rattus norvegicus (Rat).